We begin with the raw amino-acid sequence, 295 residues long: Cytidine deaminase (295 aa).

CMP/dCMP-type deaminase domains are found at residues 48–168 (TDNQ…FGPS) and 187–295 (EDDD…YLSL). Position 89 to 91 (89 to 91 (NME)) interacts with substrate. Histidine 102 is a binding site for Zn(2+). Glutamate 104 (proton donor) is an active-site residue. Zn(2+) is bound by residues cysteine 129 and cysteine 132.

It belongs to the cytidine and deoxycytidylate deaminase family. Homodimer. Zn(2+) serves as cofactor.

The catalysed reaction is cytidine + H2O + H(+) = uridine + NH4(+). It catalyses the reaction 2'-deoxycytidine + H2O + H(+) = 2'-deoxyuridine + NH4(+). Functionally, this enzyme scavenges exogenous and endogenous cytidine and 2'-deoxycytidine for UMP synthesis. The polypeptide is Cytidine deaminase (Vibrio vulnificus (strain CMCP6)).